The following is a 109-amino-acid chain: Nucleoid-associated protein VV2410 (109 aa).

Residues 1–22 (MFGKGGMGNLMKQAQQMQERMQ) form a disordered region.

It belongs to the YbaB/EbfC family. As to quaternary structure, homodimer.

It localises to the cytoplasm. The protein localises to the nucleoid. Its function is as follows. Binds to DNA and alters its conformation. May be involved in regulation of gene expression, nucleoid organization and DNA protection. In Vibrio vulnificus (strain YJ016), this protein is Nucleoid-associated protein VV2410.